Consider the following 148-residue polypeptide: Endoribonuclease YbeY (148 aa).

Zn(2+) contacts are provided by H113, H117, and H123.

It belongs to the endoribonuclease YbeY family. Requires Zn(2+) as cofactor.

It is found in the cytoplasm. In terms of biological role, single strand-specific metallo-endoribonuclease involved in late-stage 70S ribosome quality control and in maturation of the 3' terminus of the 16S rRNA. The polypeptide is Endoribonuclease YbeY (Borrelia hermsii (strain HS1 / DAH)).